The primary structure comprises 149 residues: UPF0260 protein Avin_32930 (149 aa).

The protein belongs to the UPF0260 family.

The sequence is that of UPF0260 protein Avin_32930 from Azotobacter vinelandii (strain DJ / ATCC BAA-1303).